Here is a 336-residue protein sequence, read N- to C-terminus: Glycerol-3-phosphate dehydrogenase [NAD(P)+] (336 aa).

NADPH contacts are provided by S11, W12, R33, R34, and K107. Sn-glycerol 3-phosphate is bound by residues K107 and G137. A141 contributes to the NADPH binding site. 5 residues coordinate sn-glycerol 3-phosphate: K192, D245, S255, R256, and N257. K192 (proton acceptor) is an active-site residue. Position 256 (R256) interacts with NADPH. Position 282 (E282) interacts with NADPH.

Belongs to the NAD-dependent glycerol-3-phosphate dehydrogenase family.

The protein localises to the cytoplasm. The enzyme catalyses sn-glycerol 3-phosphate + NAD(+) = dihydroxyacetone phosphate + NADH + H(+). The catalysed reaction is sn-glycerol 3-phosphate + NADP(+) = dihydroxyacetone phosphate + NADPH + H(+). The protein operates within membrane lipid metabolism; glycerophospholipid metabolism. In terms of biological role, catalyzes the reduction of the glycolytic intermediate dihydroxyacetone phosphate (DHAP) to sn-glycerol 3-phosphate (G3P), the key precursor for phospholipid synthesis. This Thermobifida fusca (strain YX) protein is Glycerol-3-phosphate dehydrogenase [NAD(P)+].